Here is a 257-residue protein sequence, read N- to C-terminus: Taurine import ATP-binding protein TauB (257 aa).

One can recognise an ABC transporter domain in the interval 6–233 (LDKISIHYDG…RYAAGEPIRA (228 aa)). 38–45 (GRSGCGKT) lines the ATP pocket.

The protein belongs to the ABC transporter superfamily. Taurine importer (TC 3.A.1.17.1) family. In terms of assembly, the complex is composed of two ATP-binding proteins (TauB), two transmembrane proteins (TauC) and a solute-binding protein (TauA).

The protein localises to the cell inner membrane. It carries out the reaction taurine(out) + ATP + H2O = taurine(in) + ADP + phosphate + H(+). In terms of biological role, part of the ABC transporter complex TauABC involved in taurine import. Responsible for energy coupling to the transport system. This Mesorhizobium japonicum (strain LMG 29417 / CECT 9101 / MAFF 303099) (Mesorhizobium loti (strain MAFF 303099)) protein is Taurine import ATP-binding protein TauB.